Consider the following 185-residue polypeptide: MKNVTDSFVYLVGHCPFAGSFAFNTDILATNPINLSIVLGVLIFFGKGVLNDLLDNRKQRILSTIQNSEELRKKTIEQLERARDRLRKVEIEADEYRINGYSEIEREKTNLINATYDSLERLENYKNETLHFEQQRAINKVRQRVFQEALQGALGTLNSCLNSDLHFRTISANIGILGAMEEITD.

The chain crosses the membrane as a helical span at residues 7 to 29 (SFVYLVGHCPFAGSFAFNTDILA).

This sequence belongs to the ATPase B chain family. As to quaternary structure, F-type ATPases have 2 components, F(1) - the catalytic core - and F(0) - the membrane proton channel. F(1) has five subunits: alpha(3), beta(3), gamma(1), delta(1), epsilon(1). F(0) has four main subunits: a(1), b(1), b'(1) and c(10-14). The alpha and beta chains form an alternating ring which encloses part of the gamma chain. F(1) is attached to F(0) by a central stalk formed by the gamma and epsilon chains, while a peripheral stalk is formed by the delta, b and b' chains.

It is found in the plastid. The protein localises to the chloroplast thylakoid membrane. Its function is as follows. F(1)F(0) ATP synthase produces ATP from ADP in the presence of a proton or sodium gradient. F-type ATPases consist of two structural domains, F(1) containing the extramembraneous catalytic core and F(0) containing the membrane proton channel, linked together by a central stalk and a peripheral stalk. During catalysis, ATP synthesis in the catalytic domain of F(1) is coupled via a rotary mechanism of the central stalk subunits to proton translocation. Functionally, component of the F(0) channel, it forms part of the peripheral stalk, linking F(1) to F(0). This is ATP synthase subunit b, chloroplastic from Dioscorea elephantipes (Elephant's foot yam).